The following is a 174-amino-acid chain: Large ribosomal subunit protein uL6 (174 aa).

This sequence belongs to the universal ribosomal protein uL6 family. As to quaternary structure, part of the 50S ribosomal subunit.

In terms of biological role, this protein binds to the 23S rRNA, and is important in its secondary structure. It is located near the subunit interface in the base of the L7/L12 stalk, and near the tRNA binding site of the peptidyltransferase center. This is Large ribosomal subunit protein uL6 from Acidithiobacillus ferrooxidans (strain ATCC 23270 / DSM 14882 / CIP 104768 / NCIMB 8455) (Ferrobacillus ferrooxidans (strain ATCC 23270)).